The following is a 433-amino-acid chain: ATP-dependent RNA helicase SUB2 (433 aa).

Positions 49–77 match the Q motif motif; that stretch reads TGFRDFLLKPELLRAIGDCGFEHPSEVQQ. Positions 80-255 constitute a Helicase ATP-binding domain; the sequence is IPQSILGTDV…KKFMQNPLEI (176 aa). 93 to 100 contributes to the ATP binding site; the sequence is AKSGLGKT. Positions 202–205 match the DEAD box motif; sequence DECD. Residues 267 to 428 enclose the Helicase C-terminal domain; it reads GLQQYYIKLE…EFPEEGVDPS (162 aa).

The protein belongs to the DEAD box helicase family. DECD subfamily.

Its subcellular location is the nucleus. It catalyses the reaction ATP + H2O = ADP + phosphate + H(+). In terms of biological role, ATP-binding RNA helicase involved in transcription elongation and required for the export of mRNA out of the nucleus. SUB2 also plays a role in pre-mRNA splicing and spliceosome assembly. May be involved in rDNA and telomeric silencing, and maintenance of genome integrity. The sequence is that of ATP-dependent RNA helicase SUB2 (SUB2) from Scheffersomyces stipitis (strain ATCC 58785 / CBS 6054 / NBRC 10063 / NRRL Y-11545) (Yeast).